A 223-amino-acid polypeptide reads, in one-letter code: uncharacterized protein (223 aa).

Residues 33 to 67 (CPICGGKGTLKAIQFIHRIPYFGEVMESTVVCERC) form a C4-type zinc finger.

This sequence belongs to the ZPR1 family.

This is an uncharacterized protein from Pyrococcus horikoshii (strain ATCC 700860 / DSM 12428 / JCM 9974 / NBRC 100139 / OT-3).